The chain runs to 208 residues: Uracil phosphoribosyltransferase (208 aa).

Residues arginine 78, arginine 103, and 130–138 (DPMLATGGS) each bind 5-phospho-alpha-D-ribose 1-diphosphate. Uracil is bound by residues isoleucine 193 and 198–200 (GDA). 5-phospho-alpha-D-ribose 1-diphosphate is bound at residue aspartate 199.

The protein belongs to the UPRTase family. Mg(2+) serves as cofactor.

It catalyses the reaction UMP + diphosphate = 5-phospho-alpha-D-ribose 1-diphosphate + uracil. The protein operates within pyrimidine metabolism; UMP biosynthesis via salvage pathway; UMP from uracil: step 1/1. Allosterically activated by GTP. Catalyzes the conversion of uracil and 5-phospho-alpha-D-ribose 1-diphosphate (PRPP) to UMP and diphosphate. The sequence is that of Uracil phosphoribosyltransferase from Shewanella piezotolerans (strain WP3 / JCM 13877).